The following is a 468-amino-acid chain: Heat stress transcription factor A-1e (468 aa).

The DNA-binding element occupies 21–115; sequence IPPFLSKTYD…ILKSIVRRKP (95 aa). The interval 133-199 is hydrophobic repeat HR-A/B; that stretch reads ACVEVGKFGL…QMMSFLAKAV (67 aa). Over residues 211 to 220 the composition is skewed to polar residues; the sequence is QSNEANQHIS. Disordered stretches follow at residues 211 to 244 and 268 to 309; these read QSNE…VNGL and QMSN…PEVT. Positions 223–227 match the Nuclear localization signal motif; the sequence is NKKRR. Residues 277-305 show a composition bias toward low complexity; sequence SLSSNNGSFLLGDVPNSNISDNGSSSNGS. Positions 402–411 match the AHA motif; the sequence is DSFWEQFIGE. The short motif at 454–461 is the Nuclear export signal element; it reads LTEQMGLL.

Belongs to the HSF family. Class A subfamily. As to quaternary structure, homotrimer. Post-translationally, exhibits temperature-dependent phosphorylation.

It localises to the cytoplasm. The protein resides in the nucleus. Its function is as follows. Transcriptional activator that specifically binds DNA sequence 5'-AGAAnnTTCT-3' known as heat shock promoter elements (HSE). The chain is Heat stress transcription factor A-1e (HSFA1E) from Arabidopsis thaliana (Mouse-ear cress).